A 202-amino-acid polypeptide reads, in one-letter code: Na(+)-translocating NADH-quinone reductase subunit E (202 aa).

6 consecutive transmembrane segments (helical) span residues 11 to 31 (SVFI…FLAM), 35 to 55 (INAA…TVPA), 81 to 101 (FLSF…MEMV), 114 to 134 (GVFL…LFMV), 144 to 164 (VVYG…LAGI), and 180 to 200 (LGIT…FGGI).

The protein belongs to the NqrDE/RnfAE family. In terms of assembly, composed of six subunits; NqrA, NqrB, NqrC, NqrD, NqrE and NqrF.

It is found in the cell inner membrane. The enzyme catalyses a ubiquinone + n Na(+)(in) + NADH + H(+) = a ubiquinol + n Na(+)(out) + NAD(+). In terms of biological role, NQR complex catalyzes the reduction of ubiquinone-1 to ubiquinol by two successive reactions, coupled with the transport of Na(+) ions from the cytoplasm to the periplasm. NqrA to NqrE are probably involved in the second step, the conversion of ubisemiquinone to ubiquinol. In Cellvibrio japonicus (strain Ueda107) (Pseudomonas fluorescens subsp. cellulosa), this protein is Na(+)-translocating NADH-quinone reductase subunit E.